A 329-amino-acid polypeptide reads, in one-letter code: MSFLFNKRPKSTQDVVRCLCDNLPKLEINNDKKKSFEEVSKCLQNLRVSLCGTAEVEPDADLVSDLSFQIYQSNLPFLLVRYLPKLEFESKKDTGLIFSALLRRHVASRYPTVDYMLAHPQIFPVLVSYYRYQEVAFTAGSILRECSRHEALNEVLLNSRDFWTFFSLIQASSFDMASDAFSTFKSILLNHKSQVAEFISYHFDEFFKQYTVLLKSENYVTKRQSLKLLGEILLNRANRSVMTRYISSAENLKLMMILLRDKSKNIQFEAFHVFKLFVANPEKSEEVIEILRRNKSKLISYLSAFHTDRKNDEQFNDERAFVIKQIERL.

It belongs to the Mo25 family.

The protein is Mo25-like protein (pmo25) of Schizosaccharomyces pombe (strain 972 / ATCC 24843) (Fission yeast).